Consider the following 399-residue polypeptide: MAGCILLLRGFILTLILHQVELSVFLPAPKANNVLRRWRRGSSYFLEEIFQGNLEKECYEEVCNYEEAREVFENDVITDEFWRQYGGGSPCVSQPCLNNGTCEDHIRSYSCTCSPGYEGKTCAMAKNECHLERTDGCQHFCHPGQSSYMCSCAKGYKLGKDQKSCGPSDKCACGALTSEHIRMTKSSQSQPSFPWQVRLTNSEGEDFCAGVLLQEDFVLTTAKCSLLHSNISVKANVDQRIRIKSTHVHMRYDEESGENDVSLLQLEEPLQCPSSGLPVCVPERDFAEHVLIPGTEGLLSGWMLNGTHLATTPMLLSVTQADGEECGQTLNVTVTTRTSCEKGSVVMGPWVEGSVVTREHKGTWFLTGILGSPPPPGQSQMLLLTAVPRYSMWFKQIMK.

Residues 1-22 form the signal peptide; the sequence is MAGCILLLRGFILTLILHQVEL. The propeptide occupies 23-40; it reads SVFLPAPKANNVLRRWRR. The 46-residue stretch at 41–86 folds into the Gla domain; it reads GSSYFLEEIFQGNLEKECYEEVCNYEEAREVFENDVITDEFWRQYG. Residues E47, E48, E55, E57, E60, E61, E66, E67, E70, E73, and E80 each carry the 4-carboxyglutamate modification. A disulfide bridge links C58 with C63. 2 consecutive EGF-like domains span residues 87–123 and 125–166; these read GGSPCVSQPCLNNGTCEDHIRSYSCTCSPGYEGKTCA and AKNE…KSCG. 7 disulfides stabilise this stretch: C91/C102, C96/C111, C113/C122, C129/C141, C137/C150, C152/C165, and C208/C224. N99 carries N-linked (GlcNAc...) asparagine glycosylation. D104 carries the (3R)-3-hydroxyaspartate modification. Residues 172–399 form the Peptidase S1 domain; the sequence is ACGALTSEHI…YSMWFKQIMK (228 aa). N-linked (GlcNAc...) asparagine glycans are attached at residues N230, N305, and N331. C326 and C340 are joined by a disulfide.

It belongs to the peptidase S1 family. In terms of processing, the iron and 2-oxoglutarate dependent 3-hydroxylation of aspartate and asparagine is (R) stereospecific within EGF domains. As to expression, plasma.

It localises to the secreted. Functionally, appears to assist hemostasis by binding thrombin and promoting its association with phospholipid vesicles. Inhibits activity of the coagulation protease factor Xa in the presence of SERPINA10, calcium and phospholipids. This is Vitamin K-dependent protein Z (Proz) from Mus musculus (Mouse).